Reading from the N-terminus, the 284-residue chain is Phosphatidylglycerol--prolipoprotein diacylglyceryl transferase (284 aa).

Helical transmembrane passes span 18–38 (LGGI…VIAF), 62–82 (YFLW…VLIY), 106–126 (FVGI…IASY), 136–156 (LLIY…FGRI), 190–210 (PSQL…VLWA), 218–238 (GLLI…AEFY), and 252–272 (LSMG…ILLY). Position 155 (Arg-155) interacts with a 1,2-diacyl-sn-glycero-3-phospho-(1'-sn-glycerol).

This sequence belongs to the Lgt family.

It localises to the cell inner membrane. It carries out the reaction L-cysteinyl-[prolipoprotein] + a 1,2-diacyl-sn-glycero-3-phospho-(1'-sn-glycerol) = an S-1,2-diacyl-sn-glyceryl-L-cysteinyl-[prolipoprotein] + sn-glycerol 1-phosphate + H(+). Its pathway is protein modification; lipoprotein biosynthesis (diacylglyceryl transfer). Functionally, catalyzes the transfer of the diacylglyceryl group from phosphatidylglycerol to the sulfhydryl group of the N-terminal cysteine of a prolipoprotein, the first step in the formation of mature lipoproteins. This is Phosphatidylglycerol--prolipoprotein diacylglyceryl transferase from Helicobacter pylori (strain G27).